The primary structure comprises 842 residues: Xyloglucanase Xgh74A (842 aa).

A signal peptide spans 1-32; it reads MVKKFTSKIKAAVFAAVVAATAIFGPAISSQA. The Nucleophile role is filled by D70. BNR repeat units lie at residues 134-144, 185-196, 252-262, and 358-368; these read RSTDRGETWEK, WRSTDYGVTWSK, YRSTDGGVTWK, and FRSTDGGATWK. Residue D480 is the Proton donor of the active site. 5 BNR repeats span residues 533–541, 577–586, 616–626, 660–671, and 708–718; these read FSYDGGRNW, VTTDNGNSWK, YISTDGGLTFT, WRSTDGGYTFEK, and FRSDDAGKTWV. The region spanning 771–841 is the Dockerin domain; it reads DKGLVGDLNG…LLQAIPELPK (71 aa).

Belongs to the glycosyl hydrolase 74 family.

In terms of biological role, hydrolyzes the glucosidic bonds of unbranched Glc residues in tamarind seed xyloglucan, producing XXXG, XLXG, XXLG and XLLG. Has low activity on carboxymethylcellulose, lichenan,hydroxyethylcellulose and glucuronoxylan, and no activity on xylan, polygalaturonic acid, wheat arabinoxylan, rhamnogalacturan, curdlan, laminarin, galactomannan, galactan, arabinan and pachyman or amorphous cellulose. The polypeptide is Xyloglucanase Xgh74A (Acetivibrio thermocellus (Hungateiclostridium thermocellum)).